Here is a 122-residue protein sequence, read N- to C-terminus: MANHEQIIEAIKEMSVLELNDLVKAIEEEFGVTAAAPVAVAGAAGGADAAAEKTEFDVELTSAGSSKIKVVKAVKEATGLGLKDAKELVDGAPKVIKEALPKEEAEKLKEQLEEVGATVEIK.

The protein belongs to the bacterial ribosomal protein bL12 family. Homodimer. Part of the ribosomal stalk of the 50S ribosomal subunit. Forms a multimeric L10(L12)X complex, where L10 forms an elongated spine to which 2 to 4 L12 dimers bind in a sequential fashion. Binds GTP-bound translation factors.

In terms of biological role, forms part of the ribosomal stalk which helps the ribosome interact with GTP-bound translation factors. Is thus essential for accurate translation. This chain is Large ribosomal subunit protein bL12, found in Staphylococcus aureus (strain Newman).